A 205-amino-acid chain; its full sequence is DNA-directed RNA polymerase RPB5 homolog (205 aa).

Belongs to the archaeal RpoH/eukaryotic RPB5 RNA polymerase subunit family. Part of the viral DNA-directed RNA polymerase that consists of 8 polII-like subunits (RPB1, RPB2, RPB3, RPB5, RPB6, RPB7, RPB9, RPB10), a capping enzyme and a termination factor.

Its subcellular location is the host cytoplasm. It localises to the virion. Its function is as follows. Component of the DNA-directed RNA polymerase (RNAP) that catalyzes the transcription in the cytoplasm of viral DNA into RNA using the four ribonucleoside triphosphates as substrates. This Ornithodoros (relapsing fever ticks) protein is DNA-directed RNA polymerase RPB5 homolog.